An 89-amino-acid chain; its full sequence is Small ribosomal subunit protein uS15 (89 aa).

The protein belongs to the universal ribosomal protein uS15 family. As to quaternary structure, part of the 30S ribosomal subunit. Forms a bridge to the 50S subunit in the 70S ribosome, contacting the 23S rRNA.

One of the primary rRNA binding proteins, it binds directly to 16S rRNA where it helps nucleate assembly of the platform of the 30S subunit by binding and bridging several RNA helices of the 16S rRNA. Its function is as follows. Forms an intersubunit bridge (bridge B4) with the 23S rRNA of the 50S subunit in the ribosome. The protein is Small ribosomal subunit protein uS15 of Cellvibrio japonicus (strain Ueda107) (Pseudomonas fluorescens subsp. cellulosa).